An 88-amino-acid chain; its full sequence is Small ribosomal subunit protein uS15 (88 aa).

Residues M1–D20 are compositionally biased toward polar residues. The disordered stretch occupies residues M1–P24.

The protein belongs to the universal ribosomal protein uS15 family. In terms of assembly, part of the 30S ribosomal subunit. Forms a bridge to the 50S subunit in the 70S ribosome, contacting the 23S rRNA.

Functionally, one of the primary rRNA binding proteins, it binds directly to 16S rRNA where it helps nucleate assembly of the platform of the 30S subunit by binding and bridging several RNA helices of the 16S rRNA. In terms of biological role, forms an intersubunit bridge (bridge B4) with the 23S rRNA of the 50S subunit in the ribosome. This chain is Small ribosomal subunit protein uS15, found in Francisella philomiragia subsp. philomiragia (strain ATCC 25017 / CCUG 19701 / FSC 153 / O#319-036).